Reading from the N-terminus, the 1189-residue chain is Phosphatidylinositol 3,4,5-trisphosphate 5-phosphatase 1 (1189 aa).

An SH2 domain is found at 5-101 (WNHGNITRSK…GLVTHLQYPV (97 aa)). The span at 103–117 (LEEEDTGDDPEEDTV) shows a compositional bias: acidic residues. The interval 103–132 (LEEEDTGDDPEEDTVESVVSPPELPPRNIP) is disordered. Positions 124–129 (PELPPR) match the SH3-binding 1 motif. The residue at position 243 (S243) is a Phosphoserine. The disordered stretch occupies residues 870–906 (TERDESSGPKTLKSLTSHDPMKQWEVTSRAPPCSGSS). Residues 912–915 (NPNY) carry the NPXY motif 1 motif. Phosphotyrosine is present on Y915. The disordered stretch occupies residues 922-1189 (GPPMPLHVKQ…PGPLGRTAMQ (268 aa)). The span at 931 to 943 (QTLSPDQQPTAWS) shows a compositional bias: polar residues. S934 carries the post-translational modification Phosphoserine. Residue Y944 is modified to Phosphotyrosine. Position 960 is a phosphoserine (S960). A compositionally biased stretch (pro residues) spans 961 to 971 (PPTPPGQPPIS). Residue T963 is modified to Phosphothreonine. Positions 969–974 (PISPKK) match the SH3-binding 2 motif. The residue at position 971 (S971) is a Phosphoserine. Residues 1016-1030 (MFENPLYGSLSSFPK) are interaction with DAB2. The NPXY motif 2 signature appears at 1019 to 1022 (NPLY). Y1022 bears the Phosphotyrosine mark. Positions 1033-1047 (PRKDQESPKMPRKEP) are enriched in basic and acidic residues. An SH3-binding 3 motif is present at residues 1040-1051 (PKMPRKEPPPCP). The span at 1134-1145 (PPTPTPRPPLPV) shows a compositional bias: pro residues. Residues 1157–1177 (KGRDYRDNTELPHHGKHRPEE) show a composition bias toward basic and acidic residues.

The protein belongs to the inositol 1,4,5-trisphosphate 5-phosphatase family. As to quaternary structure, interacts with tyrosine phosphorylated form of SHC1. Interacts with tyrosine phosphorylated form of DOK1. Interacts with tyrosine phosphorylated form of DOK3. Interacts with tyrosine phosphorylated form of SLAMF1/CD150. Interacts with PTPN11 in response to IL-3. Interacts with receptor EPOR. Interacts with receptors MS4A2/FCER1B and FCER1G. Interacts with receptors FCGR2B and FCGR3. Interacts with receptor FCGR2A, leading to regulate gene expression during the phagocytic process. Interacts with GRB2. Interacts with PLCG1. Interacts with tyrosine kinases SRC and TEC. Interacts with c-Met/MET. Interacts with MILR1 (tyrosine-phosphorylated). Can weakly interact (via NPXY motif 2) with DAB2 (via PID domain); the interaction is impaired by tyrosine phosphorylation of the NPXY motif. Interacts with FCRL3 and FCRL6 (tyrosine phosphorylated form). Interacts (via SH2 domain) with tyrosine phosphorylated KLRC1 (via ITIM). Interacts with MPL/TPOR. In terms of processing, tyrosine phosphorylated by the members of the SRC family after exposure to a diverse array of extracellular stimuli such as cytokines, growth factors, antibodies, chemokines, integrin ligands and hypertonic and oxidative stress. Phosphorylated upon IgG receptor FCGR2B-binding. Specifically expressed in immune and hematopoietic cells. Expressed in bone marrow and blood cells. Levels vary considerably within this compartment. Present in at least 74% of immature CD34+ cells, whereas within the more mature population of CD33+ cells, it is present in only 10% of cells. Present in the majority of T-cells, while it is present in a minority of B-cells (at protein level).

The protein resides in the cytoplasm. It localises to the cell membrane. It is found in the membrane raft. The protein localises to the cytoskeleton. Its subcellular location is the membrane. The enzyme catalyses a 1,2-diacyl-sn-glycero-3-phospho-(1D-myo-inositol-3,4,5-trisphosphate) + H2O = a 1,2-diacyl-sn-glycero-3-phospho-(1D-myo-inositol-3,4-bisphosphate) + phosphate. It carries out the reaction 1D-myo-inositol 1,3,4,5-tetrakisphosphate + H2O = 1D-myo-inositol 1,3,4-trisphosphate + phosphate. It catalyses the reaction a 1,2-diacyl-sn-glycero-3-phospho-(1D-myo-inositol-4,5-bisphosphate) + H2O = a 1,2-diacyl-sn-glycero-3-phospho-(1D-myo-inositol 4-phosphate) + phosphate. With respect to regulation, activated upon translocation to the sites of synthesis of PtdIns(3,4,5)P3 in the membrane. Functionally, phosphatidylinositol (PtdIns) phosphatase that specifically hydrolyzes the 5-phosphate of phosphatidylinositol-3,4,5-trisphosphate (PtdIns(3,4,5)P3) to produce PtdIns(3,4)P2, thereby negatively regulating the PI3K (phosphoinositide 3-kinase) pathways. Able also to hydrolyzes the 5-phosphate of phosphatidylinositol-4,5-bisphosphate (PtdIns(4,5)P3) and inositol 1,3,4,5-tetrakisphosphate. Acts as a negative regulator of B-cell antigen receptor signaling. Mediates signaling from the FC-gamma-RIIB receptor (FCGR2B), playing a central role in terminating signal transduction from activating immune/hematopoietic cell receptor systems. Acts as a negative regulator of myeloid cell proliferation/survival and chemotaxis, mast cell degranulation, immune cells homeostasis, integrin alpha-IIb/beta-3 signaling in platelets and JNK signaling in B-cells. Regulates proliferation of osteoclast precursors, macrophage programming, phagocytosis and activation and is required for endotoxin tolerance. Involved in the control of cell-cell junctions, CD32a signaling in neutrophils and modulation of EGF-induced phospholipase C activity. Key regulator of neutrophil migration, by governing the formation of the leading edge and polarization required for chemotaxis. Modulates FCGR3/CD16-mediated cytotoxicity in NK cells. Mediates the activin/TGF-beta-induced apoptosis through its Smad-dependent expression. The protein is Phosphatidylinositol 3,4,5-trisphosphate 5-phosphatase 1 (INPP5D) of Homo sapiens (Human).